We begin with the raw amino-acid sequence, 788 residues long: DNA ligase (788 aa).

NAD(+)-binding positions include 35–39 (DAEYD), 84–85 (SL), and glutamate 124. The N6-AMP-lysine intermediate role is filled by lysine 126. The NAD(+) site is built by arginine 147, glutamate 184, lysine 300, and lysine 324. Cysteine 418, cysteine 421, cysteine 448, and cysteine 454 together coordinate Zn(2+). The region spanning 707-788 (AEGLPLAGQT…FIERLAQLGS (82 aa)) is the BRCT domain.

This sequence belongs to the NAD-dependent DNA ligase family. LigA subfamily. Mg(2+) serves as cofactor. It depends on Mn(2+) as a cofactor.

It carries out the reaction NAD(+) + (deoxyribonucleotide)n-3'-hydroxyl + 5'-phospho-(deoxyribonucleotide)m = (deoxyribonucleotide)n+m + AMP + beta-nicotinamide D-nucleotide.. DNA ligase that catalyzes the formation of phosphodiester linkages between 5'-phosphoryl and 3'-hydroxyl groups in double-stranded DNA using NAD as a coenzyme and as the energy source for the reaction. It is essential for DNA replication and repair of damaged DNA. The polypeptide is DNA ligase (Stutzerimonas stutzeri (strain A1501) (Pseudomonas stutzeri)).